The primary structure comprises 718 residues: DNA ligase (718 aa).

NAD(+) is bound by residues 44–48 (DADYD), 93–94 (SL), and glutamate 127. Residue lysine 129 is the N6-AMP-lysine intermediate of the active site. NAD(+) is bound by residues arginine 150, glutamate 186, lysine 302, and lysine 326. Cysteine 432, cysteine 435, cysteine 456, and cysteine 462 together coordinate Zn(2+). Residues 640–718 (TAGSPVAGKT…EDEWLALISG (79 aa)) enclose the BRCT domain.

Belongs to the NAD-dependent DNA ligase family. LigA subfamily. The cofactor is Mg(2+). Requires Mn(2+) as cofactor.

The enzyme catalyses NAD(+) + (deoxyribonucleotide)n-3'-hydroxyl + 5'-phospho-(deoxyribonucleotide)m = (deoxyribonucleotide)n+m + AMP + beta-nicotinamide D-nucleotide.. Its function is as follows. DNA ligase that catalyzes the formation of phosphodiester linkages between 5'-phosphoryl and 3'-hydroxyl groups in double-stranded DNA using NAD as a coenzyme and as the energy source for the reaction. It is essential for DNA replication and repair of damaged DNA. In Rhizobium etli (strain CIAT 652), this protein is DNA ligase.